The sequence spans 318 residues: Elongation factor Ts, mitochondrial (318 aa).

Residues 1 to 18 constitute a mitochondrion transit peptide; sequence MLLQRFFTRALHSTRQLY.

This sequence belongs to the EF-Ts family.

Its subcellular location is the mitochondrion. Its function is as follows. Associates with the EF-Tu.GDP complex and induces the exchange of GDP to GTP. It remains bound to the aminoacyl-tRNA.EF-Tu.GTP complex up to the GTP hydrolysis stage on the ribosome. This is Elongation factor Ts, mitochondrial from Drosophila melanogaster (Fruit fly).